A 361-amino-acid chain; its full sequence is MSVQVSPEQMATLKATLLNTPGNVPLHERFRALFMLKAVGGDEVVDIVSEGLKDPSPLLKHELAYVLGQLLNTRALPTLSRVLENPTGEHCSMVRHEAAEALGAIGAEESLPILRKYMQDENREVRETCEIAVGKIEFDLSEEGKKANANPDFPTIDPAPSAAPSDIPSLRADLLNTSLPLFQRYRAMFALRDFGAGSKEAVEALADGFRDGSALFRHEIAYIFGQLSSPYSIPSLLSRLRDAKEDDMVRHEAAEALGGIASDGVESENPEVVLPEDERLPEGGVLAVLREWAVKADAPTVVRESCQVAIDMWEYENSADQFNPLDSLSAKQEEREKTEKVNTTGMERSAHAAVAAMGIAA.

4 HEAT-like PBS-type repeats span residues 59–85 (LKHELAYVLGQLLNTRALPTLSRVLEN), 94–120 (VRHEAAEALGAIGAEESLPILRKYMQD), 183–211 (QRYRAMFALRDFGAGSKEAVEALADGFRD), and 216–242 (FRHEIAYIFGQLSSPYSIPSLLSRLRD). His61, Glu62, His96, and Glu97 together coordinate Fe cation. Fe cation-binding residues include His218, Glu219, His251, and Glu252.

The protein belongs to the deoxyhypusine hydroxylase family. The cofactor is Fe(2+).

It localises to the cytoplasm. Its subcellular location is the nucleus. It carries out the reaction [eIF5A protein]-deoxyhypusine + AH2 + O2 = [eIF5A protein]-hypusine + A + H2O. It functions in the pathway protein modification; eIF5A hypusination. Its function is as follows. Catalyzes the hydroxylation of the N(6)-(4-aminobutyl)-L-lysine intermediate to form hypusine, an essential post-translational modification only found in mature eIF-5A factor. The protein is Deoxyhypusine hydroxylase of Cryptococcus neoformans var. neoformans serotype D (strain B-3501A) (Filobasidiella neoformans).